The primary structure comprises 131 residues: UPF0102 protein YraN (131 aa).

Belongs to the UPF0102 family.

The chain is UPF0102 protein YraN from Salmonella typhimurium (strain LT2 / SGSC1412 / ATCC 700720).